We begin with the raw amino-acid sequence, 245 residues long: ATP synthase subunit a (245 aa).

Transmembrane regions (helical) follow at residues 5–25 (LWFT…MMSV), 37–57 (ISNY…FFIA), 99–119 (YIVT…IPGF), 125–145 (FPSV…VHGL), 157–177 (FLGP…CSHF), 187–209 (LYAN…PLGF), and 221–241 (SLIQ…EATA).

It belongs to the ATPase A chain family. In terms of assembly, F-type ATPases have 2 components, CF(1) - the catalytic core - and CF(0) - the membrane proton channel. CF(1) has five subunits: alpha(3), beta(3), gamma(1), delta(1), epsilon(1). CF(0) has three main subunits: a(1), b(2) and c(9-12). The alpha and beta chains form an alternating ring which encloses part of the gamma chain. CF(1) is attached to CF(0) by a central stalk formed by the gamma and epsilon chains, while a peripheral stalk is formed by the delta and b chains.

It is found in the cell inner membrane. Key component of the proton channel; it plays a direct role in the translocation of protons across the membrane. This chain is ATP synthase subunit a, found in Koribacter versatilis (strain Ellin345).